We begin with the raw amino-acid sequence, 463 residues long: Glycine--tRNA ligase (463 aa).

Residues arginine 100 and glutamate 175 each contribute to the substrate site. Residues arginine 207–glutamate 209, phenylalanine 217–phenylalanine 222, glutamate 291–leucine 292, and glycine 335–arginine 338 contribute to the ATP site. Residue phenylalanine 222–glutamate 226 coordinates substrate. Substrate is bound at residue glutamate 331–glycine 335.

Belongs to the class-II aminoacyl-tRNA synthetase family. In terms of assembly, homodimer.

It localises to the cytoplasm. The enzyme catalyses tRNA(Gly) + glycine + ATP = glycyl-tRNA(Gly) + AMP + diphosphate. In terms of biological role, catalyzes the attachment of glycine to tRNA(Gly). The chain is Glycine--tRNA ligase from Clostridium beijerinckii (strain ATCC 51743 / NCIMB 8052) (Clostridium acetobutylicum).